Consider the following 171-residue polypeptide: Regulatory protein RecX (171 aa).

Belongs to the RecX family.

The protein localises to the cytoplasm. Modulates RecA activity. This is Regulatory protein RecX from Mycobacterium leprae (strain Br4923).